The sequence spans 158 residues: Large ribosomal subunit protein uL30 (158 aa).

This sequence belongs to the universal ribosomal protein uL30 family. In terms of assembly, part of the 50S ribosomal subunit.

This is Large ribosomal subunit protein uL30 from Sulfurisphaera tokodaii (strain DSM 16993 / JCM 10545 / NBRC 100140 / 7) (Sulfolobus tokodaii).